Consider the following 291-residue polypeptide: Pyridoxal 5'-phosphate synthase subunit PdxS (291 aa).

Asp-23 serves as a coordination point for D-ribose 5-phosphate. Residue Lys-80 is the Schiff-base intermediate with D-ribose 5-phosphate of the active site. D-ribose 5-phosphate is bound at residue Gly-152. A D-glyceraldehyde 3-phosphate-binding site is contributed by Arg-164. Residues Gly-213 and 234–235 (GS) contribute to the D-ribose 5-phosphate site.

Belongs to the PdxS/SNZ family. As to quaternary structure, in the presence of PdxT, forms a dodecamer of heterodimers.

The enzyme catalyses aldehydo-D-ribose 5-phosphate + D-glyceraldehyde 3-phosphate + L-glutamine = pyridoxal 5'-phosphate + L-glutamate + phosphate + 3 H2O + H(+). It functions in the pathway cofactor biosynthesis; pyridoxal 5'-phosphate biosynthesis. Catalyzes the formation of pyridoxal 5'-phosphate from ribose 5-phosphate (RBP), glyceraldehyde 3-phosphate (G3P) and ammonia. The ammonia is provided by the PdxT subunit. Can also use ribulose 5-phosphate and dihydroxyacetone phosphate as substrates, resulting from enzyme-catalyzed isomerization of RBP and G3P, respectively. The polypeptide is Pyridoxal 5'-phosphate synthase subunit PdxS (Haemophilus influenzae (strain ATCC 51907 / DSM 11121 / KW20 / Rd)).